A 656-amino-acid chain; its full sequence is MAEIIGIDLGTTNSCVAVMEGGKVRVIENAEGSRTTPSIVAYTKDGEVLVGASAKRQAVTNADRTLYAIKRLIGRRFDDNVVQKDIKMVPYKIIKADNGDAWVEVKDKEGKSQKLAPPQISAQVLIKMKKTAEDYLGHEVKDAVITVPAYFNDSQRQATKDAGKIAGLNVKRIINEPTAAALAYGMDKKKGDRKIAVYDLGGGTFDISIIEIAEVDGEHQFEVLATNGDTFLGGEDFDLRLIDYLAGEFKKDEGVDLHNDPLALQRLKEAAEKAKIELSSSQQTDVNLPYITADASGPKHLNIRLTRAKLESLVEDLVERTIEPCKVAIKDAGLKVSEIDDVILVGGQTRMPKVQEAVKNFFGKEARKDVNPDEAVAIGAAIQGAVLSGEVKDVLLLDVTPLSLGIETLGGVMTKLIEKNTTIPTKANQVFSTADDNQTAVTVHVLQGEREMASANKSLGRFDLSDIPPAPRGVPQIEVTFDIDANGILHVSAKDKATGKEQSIVIKASSGLSDEEVEKMVKDAEAHRDSDRKFHELVDARNQADAMIHAAEKSVKDLGSEVSADEKSAIEKAVNELKEAMKGNDKDAIEAKTKALTEHSSKLAERVYAKKGGAAGAPPGGEAEGEPQAQAGGKKEDVVDAEFEEVKDEKKKDEDK.

Thr-204 is modified (phosphothreonine; by autocatalysis). The disordered stretch occupies residues 607-656 (VYAKKGGAAGAPPGGEAEGEPQAQAGGKKEDVVDAEFEEVKDEKKKDEDK). Positions 620–632 (GGEAEGEPQAQAG) are enriched in low complexity. The span at 647 to 656 (KDEKKKDEDK) shows a compositional bias: basic and acidic residues.

This sequence belongs to the heat shock protein 70 family.

Functionally, acts as a chaperone. This is Chaperone protein DnaK from Coxiella burnetii (strain CbuK_Q154) (Coxiella burnetii (strain Q154)).